Here is a 419-residue protein sequence, read N- to C-terminus: Ubiquitin-like modifier-activating enzyme 5 (419 aa).

The segment at 18–47 (NRLGNVKKDHPLESSSNSKPTHQPKSPAPY) is disordered. Polar residues predominate over residues 30–41 (ESSSNSKPTHQP). The ATP site is built by Gly-94, Asp-115, Lys-138, Asn-161, and Asn-194. The Zn(2+) site is built by Cys-236 and Cys-239. The Glycyl thioester intermediate role is filled by Cys-260. Zn(2+) contacts are provided by Cys-313 and Cys-318.

This sequence belongs to the ubiquitin-activating E1 family. UBA5 subfamily. In terms of assembly, interacts with ufc-1. In terms of tissue distribution, expressed in the intestine.

In terms of biological role, E1-like enzyme which activates ufm-1. Required for interaction between ufm-1 and ufc-1. The protein is Ubiquitin-like modifier-activating enzyme 5 of Caenorhabditis elegans.